The primary structure comprises 807 residues: Probable dimethyl sulfoxide reductase chain YnfF (807 aa).

Positions 1–45 form a signal peptide, tat-type signal; that stretch reads MKIHTTEALMKAEISRRSLMKTSALGSLALASSAFTLPFSQMVRA. The 62-residue stretch at 52–113 folds into the 4Fe-4S Mo/W bis-MGD-type domain; that stretch reads EKAVWSSCTV…SIRRRMNHPD (62 aa). The [4Fe-4S] cluster site is built by Cys59, Cys63, Cys67, and Cys99. Ser195 lines the Mo-bis(molybdopterin guanine dinucleotide) pocket.

Belongs to the prokaryotic molybdopterin-containing oxidoreductase family. The complex consists of three subunits: YnfF, the reductase; YnfG, an electron transfer protein, and YnfH, a membrane anchor protein. It depends on [4Fe-4S] cluster as a cofactor. The cofactor is Mo-bis(molybdopterin guanine dinucleotide). In terms of processing, exported by the Tat system. The position of the signal peptide cleavage has not been experimentally proven. Can also be exported by the Sec system.

The protein localises to the cell membrane. In terms of biological role, terminal reductase during anaerobic growth on various sulfoxide and N-oxide compounds. This chain is Probable dimethyl sulfoxide reductase chain YnfF (ynfF), found in Escherichia coli (strain K12).